A 336-amino-acid chain; its full sequence is Methionyl-tRNA formyltransferase (336 aa).

Residue Ser-112 to Pro-115 coordinates (6S)-5,6,7,8-tetrahydrofolate.

It belongs to the Fmt family.

It catalyses the reaction L-methionyl-tRNA(fMet) + (6R)-10-formyltetrahydrofolate = N-formyl-L-methionyl-tRNA(fMet) + (6S)-5,6,7,8-tetrahydrofolate + H(+). In terms of biological role, attaches a formyl group to the free amino group of methionyl-tRNA(fMet). The formyl group appears to play a dual role in the initiator identity of N-formylmethionyl-tRNA by promoting its recognition by IF2 and preventing the misappropriation of this tRNA by the elongation apparatus. This chain is Methionyl-tRNA formyltransferase, found in Trichodesmium erythraeum (strain IMS101).